Here is a 781-residue protein sequence, read N- to C-terminus: Probable aminopeptidase 2 (781 aa).

Substrate-binding positions include glutamate 105 and 237 to 241 (GAMEN). Position 272 (histidine 272) interacts with Zn(2+). Glutamate 273 functions as the Proton acceptor in the catalytic mechanism. Residues histidine 276 and glutamate 295 each coordinate Zn(2+).

It belongs to the peptidase M1 family. It depends on Zn(2+) as a cofactor.

It localises to the cytoplasm. The chain is Probable aminopeptidase 2 (ape2) from Sulfurisphaera tokodaii (strain DSM 16993 / JCM 10545 / NBRC 100140 / 7) (Sulfolobus tokodaii).